Consider the following 158-residue polypeptide: Tryptophan-rich protein TspO (158 aa).

A run of 5 helical transmembrane segments spans residues 5–25, 48–68, 79–99, 105–125, and 134–154; these read ILTL…GSTF, LFPP…AKVL, VGVV…ASFF, LAGL…MLAF, and LLLV…FTIL.

It belongs to the TspO/BZRP family.

It is found in the membrane. Its subcellular location is the cell membrane. Binds tetrapyrroles and promotes the photooxidative degradation of protoporphyrin IX. Can bind the benzodiazepine receptor agonist PK-11195 (in vitro); this interferes with photooxidative tetrapyrrole degradation. May play a role in the transmembrane transport of tetrapyrroles and similar compounds. This Chlorobaculum tepidum (strain ATCC 49652 / DSM 12025 / NBRC 103806 / TLS) (Chlorobium tepidum) protein is Tryptophan-rich protein TspO.